A 119-amino-acid chain; its full sequence is U-scoloptoxin(01)-Cw1a (119 aa).

Positions 1–22 (MSKATNFYLFVLLGVFVALVRT) are cleaved as a signal peptide. One can recognise a Chitin-binding type-2 domain in the interval 38 to 96 (SFSCDGKKPGYYADQQMECQVYHVCTPDNEHAVLLCGPGTIFNQKHLVCDFPSNYACAD). Cysteine 73 and cysteine 86 form a disulfide bridge.

Belongs to the scoloptoxin-01 family. In terms of processing, contains 3 disulfide bonds. As to expression, expressed by the venom gland.

The protein resides in the secreted. The chain is U-scoloptoxin(01)-Cw1a from Cormocephalus westwoodi (Westwood's green centipede).